The sequence spans 735 residues: DNA replication licensing factor mcm5 (735 aa).

In terms of domain architecture, MCM spans 332–538 (IYETVAKSIA…RDMTLAKHVM (207 aa)). ADP is bound at residue R372. The Arginine finger motif lies at 513-516 (SRFD).

The protein belongs to the MCM family. As to quaternary structure, component of the mcm2-7 complex (RLF-M). The complex forms a toroidal hexameric ring with the proposed subunit order mcm2-mcm6-mcm4-mcm7-mcm3-mcm5. The heterodimer of mmcm3/mcm5 interacts with mcm4, mmcm6, mcm7 and weakly with mcm2. Component of the CMG helicase complex, composed of the mcm2-7 complex, the GINS complex and cdc45.

Its subcellular location is the nucleus. It localises to the chromosome. The catalysed reaction is ATP + H2O = ADP + phosphate + H(+). In terms of biological role, acts as a component of the MCM2-7 complex (MCM complex) which is the replicative helicase essential for 'once per cell cycle' DNA replication initiation and elongation in eukaryotic cells. Core component of CDC45-MCM-GINS (CMG) helicase, the molecular machine that unwinds template DNA during replication, and around which the replisome is built. The active ATPase sites in the MCM2-7 ring are formed through the interaction surfaces of two neighboring subunits such that a critical structure of a conserved arginine finger motif is provided in trans relative to the ATP-binding site of the Walker A box of the adjacent subunit. The six ATPase active sites, however, are likely to contribute differentially to the complex helicase activity. The sequence is that of DNA replication licensing factor mcm5 from Xenopus tropicalis (Western clawed frog).